Reading from the N-terminus, the 88-residue chain is Small ribosomal subunit protein uS15 (88 aa).

This sequence belongs to the universal ribosomal protein uS15 family. In terms of assembly, part of the 30S ribosomal subunit. Forms a bridge to the 50S subunit in the 70S ribosome, contacting the 23S rRNA.

Functionally, one of the primary rRNA binding proteins, it binds directly to 16S rRNA where it helps nucleate assembly of the platform of the 30S subunit by binding and bridging several RNA helices of the 16S rRNA. In terms of biological role, forms an intersubunit bridge (bridge B4) with the 23S rRNA of the 50S subunit in the ribosome. The sequence is that of Small ribosomal subunit protein uS15 from Hydrogenovibrio crunogenus (strain DSM 25203 / XCL-2) (Thiomicrospira crunogena).